The following is a 120-amino-acid chain: Flagellar protein FliT (120 aa).

The required for homodimerization stretch occupies residues 1 to 50 (MERHQHLLSEYQQILTLSEQMLMLATVENWDALVDLEMAYLKAVENTANI). Residues 60–98 (LQELLRQKLRSILENEIEIKRLLQRRLDKLSELVGQSTR) are fliD binding.

Belongs to the FliT family. As to quaternary structure, homodimer. Interacts with FliD and FlhC.

Its subcellular location is the cytoplasm. The protein localises to the cytosol. Its function is as follows. Dual-function protein that regulates the transcription of class 2 flagellar operons and that also acts as an export chaperone for the filament-capping protein FliD. As a transcriptional regulator, acts as an anti-FlhDC factor; it directly binds FlhC, thus inhibiting the binding of the FlhC/FlhD complex to class 2 promoters, resulting in decreased expression of class 2 flagellar operons. As a chaperone, effects FliD transition to the membrane by preventing its premature polymerization, and by directing it to the export apparatus. The protein is Flagellar protein FliT of Yersinia pseudotuberculosis serotype IB (strain PB1/+).